The following is a 563-amino-acid chain: Tripeptidyl-peptidase 1 (563 aa).

The first 19 residues, 1–19 (MGLQACLLGLFALILSGKC), serve as a signal peptide directing secretion. The propeptide at 20-195 (SYSPEPDQRR…PEPQVTGTVG (176 aa)) is removed in mature form. Cysteines 111 and 122 form a disulfide. Positions 199–563 (GVTPSVIRKR…PALLKTLLNP (365 aa)) constitute a Peptidase S53 domain. 2 N-linked (GlcNAc...) asparagine glycosylation sites follow: Asn-210 and Asn-222. Residues Glu-272 and Asp-276 each act as charge relay system in the active site. N-linked (GlcNAc...) asparagine glycans are attached at residues Asn-286, Asn-313, and Asn-443. 2 disulfides stabilise this stretch: Cys-365–Cys-526 and Cys-522–Cys-537. The Charge relay system role is filled by Ser-475. Positions 517 and 518 each coordinate Ca(2+). 3 residues coordinate Ca(2+): Gly-539, Gly-541, and Asp-543.

Monomer. Interacts with CLN5. Interacts with CLN3. It depends on Ca(2+) as a cofactor. Activated by autocatalytic proteolytical processing upon acidification. N-glycosylation is required for processing and activity.

Its subcellular location is the lysosome. The protein resides in the melanosome. It carries out the reaction Release of an N-terminal tripeptide from a polypeptide, but also has endopeptidase activity.. Its function is as follows. Lysosomal serine protease with tripeptidyl-peptidase I activity. May act as a non-specific lysosomal peptidase which generates tripeptides from the breakdown products produced by lysosomal proteinases. Requires substrates with an unsubstituted N-terminus. In Pan troglodytes (Chimpanzee), this protein is Tripeptidyl-peptidase 1 (TPP1).